The primary structure comprises 544 residues: Methionine--tRNA ligase (544 aa).

Residues 10–20 (PYANGSLHLGH) carry the 'HIGH' region motif. Zn(2+) contacts are provided by Cys-141, Cys-144, Cys-153, and Cys-156. The short motif at 329–333 (KLSTS) is the 'KMSKS' region element. Thr-332 provides a ligand contact to ATP.

This sequence belongs to the class-I aminoacyl-tRNA synthetase family. MetG type 1 subfamily. Monomer. Requires Zn(2+) as cofactor.

It is found in the cytoplasm. The enzyme catalyses tRNA(Met) + L-methionine + ATP = L-methionyl-tRNA(Met) + AMP + diphosphate. Is required not only for elongation of protein synthesis but also for the initiation of all mRNA translation through initiator tRNA(fMet) aminoacylation. This Bacillus cereus (strain AH187) protein is Methionine--tRNA ligase.